Here is a 657-residue protein sequence, read N- to C-terminus: tRNA 5-methylaminomethyl-2-thiouridine biosynthesis bifunctional protein MnmC (657 aa).

The tract at residues M1 to T238 is tRNA (mnm(5)s(2)U34)-methyltransferase. The interval I265–K657 is FAD-dependent cmnm(5)s(2)U34 oxidoreductase.

In the N-terminal section; belongs to the methyltransferase superfamily. tRNA (mnm(5)s(2)U34)-methyltransferase family. It in the C-terminal section; belongs to the DAO family. It depends on FAD as a cofactor.

The protein resides in the cytoplasm. The catalysed reaction is 5-aminomethyl-2-thiouridine(34) in tRNA + S-adenosyl-L-methionine = 5-methylaminomethyl-2-thiouridine(34) in tRNA + S-adenosyl-L-homocysteine + H(+). In terms of biological role, catalyzes the last two steps in the biosynthesis of 5-methylaminomethyl-2-thiouridine (mnm(5)s(2)U) at the wobble position (U34) in tRNA. Catalyzes the FAD-dependent demodification of cmnm(5)s(2)U34 to nm(5)s(2)U34, followed by the transfer of a methyl group from S-adenosyl-L-methionine to nm(5)s(2)U34, to form mnm(5)s(2)U34. This chain is tRNA 5-methylaminomethyl-2-thiouridine biosynthesis bifunctional protein MnmC, found in Pseudomonas putida (strain W619).